Reading from the N-terminus, the 599-residue chain is DNA primase (599 aa).

The segment at 38–62 (CPFHDEKTPSFTVSEDKQICHCFGC) adopts a CHC2-type zinc-finger fold. Positions 260–341 (DEIVLLEGFM…NVFVIQLPSG (82 aa)) constitute a Toprim domain. Residues E266, D310, and D312 each coordinate Mg(2+).

Belongs to the DnaG primase family. Monomer. Interacts with DnaB. Zn(2+) serves as cofactor. It depends on Mg(2+) as a cofactor.

It carries out the reaction ssDNA + n NTP = ssDNA/pppN(pN)n-1 hybrid + (n-1) diphosphate.. In terms of biological role, RNA polymerase that catalyzes the synthesis of short RNA molecules used as primers for DNA polymerase during DNA replication. The polypeptide is DNA primase (Staphylococcus aureus (strain COL)).